A 243-amino-acid polypeptide reads, in one-letter code: Biosynthetic peptidoglycan transglycosylase (243 aa).

A helical membrane pass occupies residues L21–D43.

The protein belongs to the glycosyltransferase 51 family.

It is found in the cell inner membrane. It carries out the reaction [GlcNAc-(1-&gt;4)-Mur2Ac(oyl-L-Ala-gamma-D-Glu-L-Lys-D-Ala-D-Ala)](n)-di-trans,octa-cis-undecaprenyl diphosphate + beta-D-GlcNAc-(1-&gt;4)-Mur2Ac(oyl-L-Ala-gamma-D-Glu-L-Lys-D-Ala-D-Ala)-di-trans,octa-cis-undecaprenyl diphosphate = [GlcNAc-(1-&gt;4)-Mur2Ac(oyl-L-Ala-gamma-D-Glu-L-Lys-D-Ala-D-Ala)](n+1)-di-trans,octa-cis-undecaprenyl diphosphate + di-trans,octa-cis-undecaprenyl diphosphate + H(+). It participates in cell wall biogenesis; peptidoglycan biosynthesis. Functionally, peptidoglycan polymerase that catalyzes glycan chain elongation from lipid-linked precursors. The protein is Biosynthetic peptidoglycan transglycosylase of Xylella fastidiosa (strain Temecula1 / ATCC 700964).